A 215-amino-acid polypeptide reads, in one-letter code: 3-isopropylmalate dehydratase small subunit (215 aa).

This sequence belongs to the LeuD family. LeuD type 1 subfamily. As to quaternary structure, heterodimer of LeuC and LeuD.

It carries out the reaction (2R,3S)-3-isopropylmalate = (2S)-2-isopropylmalate. The protein operates within amino-acid biosynthesis; L-leucine biosynthesis; L-leucine from 3-methyl-2-oxobutanoate: step 2/4. Functionally, catalyzes the isomerization between 2-isopropylmalate and 3-isopropylmalate, via the formation of 2-isopropylmaleate. This chain is 3-isopropylmalate dehydratase small subunit, found in Xylella fastidiosa (strain M23).